The chain runs to 162 residues: Fibroblast growth factor 22 (162 aa).

Positions 1-22 (MRSRLWLGLAWLLLARAPGAPG) are cleaved as a signal peptide.

It belongs to the heparin-binding growth factors family. In terms of assembly, interacts with FGFR1 and FGFR2. Interacts with FGFBP1. In terms of tissue distribution, preferentially expressed in skin; low expression in brain. Expressed in the inner root sheath of the hair follicle.

The protein resides in the secreted. Functionally, plays a role in the fasting response, glucose homeostasis, lipolysis and lipogenesis. Can stimulate cell proliferation (in vitro). May be involved in hair development. This Mus musculus (Mouse) protein is Fibroblast growth factor 22 (Fgf22).